A 446-amino-acid polypeptide reads, in one-letter code: Coagulation factor VII (446 aa).

Positions 1–24 are cleaved as a signal peptide; sequence MVPQTHGLLLLYFLLQLQGPLGAV. The propeptide occupies 25 to 41; the sequence is VFITQEEAHGVLHRQRR. The Gla domain maps to 42 to 86; the sequence is ANSLLEELWSSSLERECNEERCSFEEAREIFKSPERTKQFWTIYS. 10 positions are modified to 4-carboxyglutamate: Glu-47, Glu-48, Glu-55, Glu-57, Glu-60, Glu-61, Glu-66, Glu-67, Glu-70, and Glu-76. Cys-58 and Cys-63 form a disulfide bridge. The region spanning 87–123 is the EGF-like 1; calcium-binding domain; the sequence is DGDQCASNPCQNGGTCQDHLKSYVCFCPLDFEGRNCE. 10 cysteine pairs are disulfide-bonded: Cys-91-Cys-102, Cys-96-Cys-111, Cys-113-Cys-122, Cys-132-Cys-143, Cys-139-Cys-153, Cys-155-Cys-168, Cys-176-Cys-303, Cys-200-Cys-205, Cys-219-Cys-235, and Cys-351-Cys-370. The O-linked (Glc...) serine; alternate glycan is linked to Ser-93. A glycan (O-linked (Xyl...) serine; alternate) is linked at Ser-93. Thr-101 is a glycosylation site (O-linked (Fuc) threonine). The residue at position 104 (Asp-104) is a (3R)-3-hydroxyaspartate. Residues 128–169 enclose the EGF-like 2 domain; it reads EQLICANENGDCDQYCRDHVGTKRTCSCHEDYVLQPDEVSCK. The N-linked (GlcNAc...) asparagine glycan is linked to Asn-186. The Peptidase S1 domain occupies 194–433; the sequence is IVGGYVCPKG…YIDWLVKYMD (240 aa). His-234 functions as the Charge relay system in the catalytic mechanism. Asn-244 carries N-linked (GlcNAc...) asparagine glycosylation. The Charge relay system role is filled by Asp-283. Asp-379 provides a ligand contact to substrate. Cys-381 and Cys-409 are joined by a disulfide. Ser-385 (charge relay system) is an active-site residue.

This sequence belongs to the peptidase S1 family. Heterodimer of a light chain and a heavy chain linked by a disulfide bond. The vitamin K-dependent, enzymatic carboxylation of some glutamate residues allows the modified protein to bind calcium. In terms of processing, the iron and 2-oxoglutarate dependent 3-hydroxylation of aspartate and asparagine is (R) stereospecific within EGF domains. Post-translationally, can be either O-glucosylated or O-xylosylated at Ser-93 by POGLUT1. Plasma.

The protein localises to the secreted. The enzyme catalyses Selective cleavage of Arg-|-Ile bond in factor X to form factor Xa.. Its function is as follows. Initiates the extrinsic pathway of blood coagulation. Serine protease that circulates in the blood in a zymogen form. Factor VII is converted to factor VIIa by factor Xa, factor XIIa, factor IXa, or thrombin by minor proteolysis. In the presence of tissue factor and calcium ions, factor VIIa then converts factor X to factor Xa by limited proteolysis. Factor VIIa also converts factor IX to factor IXa in the presence of tissue factor and calcium. The polypeptide is Coagulation factor VII (F7) (Rattus norvegicus (Rat)).